Here is a 1249-residue protein sequence, read N- to C-terminus: Apoptotic protease-activating factor 1 (1249 aa).

Residues 1 to 90 (MDAKARNCLL…KDLAGLLHSG (90 aa)) form the CARD domain. The NB-ARC domain occupies 106–415 (NTSFVRTVLC…LETEEVEDIL (310 aa)). ATP-binding positions include 154–161 (GMAGCGKS) and Arg265. The WD 1-1 repeat unit spans residues 613–652 (PHTDAVYHACFSQDGQRIASCGADKTLQVFKAETGEKLLD). The WD 1-2 repeat unit spans residues 655 to 694 (AHEDEVLCCAFSSDDSYIATCSVDKKVKIWDSGTGKLVHT). One copy of the WD 1-3 repeat lies at 697 to 738 (EHSEQVNCCHFTNKSNHLLLATGSNDSFLKLWDLNQKECRNT). One copy of the WD 1-4 repeat lies at 741-780 (GHTNSVTHCRFSPDDELLASCSADGTLKLWDVRSANEKKS). A WD 1-5 repeat occupies 796–837 (DVEVIVKCCSWSADGDRIIVAAKNKVLLLDIHTSGLLTEIHT). The stretch at 838 to 877 (GHHSTIQYCDFSPYDHLAVIALSQYCVELWNIDSRVKVAD) is one WD 1-6 repeat. The stretch at 880 to 910 (GHLSWVHGVMFSPDGSSFLTASDDQTIRVWE) is one WD 1-7 repeat. The interpropeller linker stretch occupies residues 910-921 (ETRKVCKNSAIV). Residues 922–958 (LKQEIDVVFQENEMMVLAVDNIRGLQLIAGKTGQIDY) form a WD 2-1 repeat. Residues 959–998 (LPEAQVSCCCLSPHLEYVAFGDEEGAIKIIELPNNRVFSS) form a WD 2-2 repeat. The stretch at 1001–1040 (GHKKAVRHIQFTADGKTLISSSEDSVIQVWNWQTEEYVFL) is one WD 2-3 repeat. The WD 2-4 repeat unit spans residues 1042 to 1080 (AHQETVKDFRLLRDSRLLSWSFDGTVKVWNVITGRIERD). Residues 1083 to 1122 (CHQGTVLSCAISSDATKFSSTSADKTAKIWSFELPSPLHE) form a WD 2-5 repeat. One copy of the WD 2-6 repeat lies at 1125 to 1164 (GHNSCVRCSAFSLDGILLATGDDNGEIRIWNVSDGQLLHL). The WD 2-7 repeat unit spans residues 1176-1213 (THGGWVTDVCFSPDRKMLVSAGGYLKWWNVVTGESSQT). A WD 2-8 repeat occupies 1214 to 1249 (FYTNGTNLKKIHVSPDFRTYVTVDNLGILYILQVLE).

As to quaternary structure, monomer. Oligomerizes to a heptameric ring, known as the apoptosome, upon binding of cytochrome c and dATP. Oligomeric Apaf-1 and pro-caspase-9 bind to each other via their respective NH2-terminal CARD domains. Interacts with UACA. Interacts with APIP. Interacts (via CARD and NACHT domains) with NAIP/BIRC1 (via NACHT domain). Interacts with CIAO2A.

The protein resides in the cytoplasm. Its function is as follows. Regulates programmed cell death; necessary for normal brain development. Participates with pro-caspase-9 (Apaf-3) in the cytochrome c-dependent activation of caspase-3, leading to apoptosis. This activation requires ATP. This is Apoptotic protease-activating factor 1 (Apaf1) from Rattus norvegicus (Rat).